The sequence spans 218 residues: Large ribosomal subunit protein uL3 (218 aa).

The protein belongs to the universal ribosomal protein uL3 family. As to quaternary structure, part of the 50S ribosomal subunit. Forms a cluster with proteins L14 and L19.

In terms of biological role, one of the primary rRNA binding proteins, it binds directly near the 3'-end of the 23S rRNA, where it nucleates assembly of the 50S subunit. In Brachyspira pilosicoli (Serpulina pilosicoli), this protein is Large ribosomal subunit protein uL3.